Here is a 70-residue protein sequence, read N- to C-terminus: uncharacterized protein (70 aa).

This sequence to M.pneumoniae MPN377.

This is an uncharacterized protein from Ureaplasma parvum serovar 3 (strain ATCC 700970).